The chain runs to 563 residues: Arginine--tRNA ligase (563 aa).

The 'HIGH' region motif lies at 123–133; the sequence is PNIAKDMHVGH.

It belongs to the class-I aminoacyl-tRNA synthetase family. In terms of assembly, monomer.

It is found in the cytoplasm. The catalysed reaction is tRNA(Arg) + L-arginine + ATP = L-arginyl-tRNA(Arg) + AMP + diphosphate. This chain is Arginine--tRNA ligase (argS), found in Chlamydia trachomatis serovar D (strain ATCC VR-885 / DSM 19411 / UW-3/Cx).